The sequence spans 843 residues: Histone-lysine N-methyltransferase PRDM9 (843 aa).

The 64-residue stretch at 23-86 (KVKDEFKDIS…QRQAMKPQIN (64 aa)) folds into the KRAB-related domain. 2 disordered regions span residues 85 to 104 (INDS…VSPP) and 110 to 170 (VKHS…KKLK). Positions 205, 208, 216, and 219 each coordinate Zn(2+). The region spanning 244–358 (PGLRISPSGI…PGCELLVWYG (115 aa)) is the SET domain. Residues 256–258 (AGL), Tyr291, and 320–321 (NC) contribute to the S-adenosyl-L-methionine site. 288-294 (NSGYSWL) is a binding site for substrate. Tyr357 contacts substrate. At Lys368 the chain carries N6,N6,N6-trimethyllysine; alternate. Residue Lys368 is modified to N6-methyllysine; alternate. Residues Lys372 and Lys374 each carry the N6-methyllysine modification. The C2H2-type 1 zinc finger occupies 388–411 (HPCLLCSLAFSSQKFLTQHMEWNH). Zn(2+)-binding residues include Cys390, Cys393, His406, and His411. The tract at residues 418–493 (GTSARINPKP…VEELRTGQTT (76 aa)) is disordered. Positions 436 to 454 (QEQHVDSQNKNDKASNEVK) are enriched in basic and acidic residues. The span at 462-472 (RISTTFPSTLK) shows a compositional bias: polar residues. A compositionally biased stretch (basic and acidic residues) spans 473-488 (EQMRSEESKRTVEELR). Residues 513–531 (QCGQYFSDKSNVNEHQKTH) form a C2H2-type 2; degenerate zinc finger. C2H2-type zinc fingers lie at residues 537 to 559 (YVCR…QRTH), 565 to 587 (YVCR…QRTH), 593 to 615 (YVCR…QRTH), 621 to 643 (YVCR…QRTH), 649 to 671 (YVCR…QRTH), 677 to 699 (YVCR…QRTH), 705 to 727 (YVCR…QRTH), 733 to 755 (YVCR…QRTH), 761 to 783 (YVCR…QRTH), 789 to 811 (YVCR…QRTH), and 817 to 839 (YVCR…QRTH). Zn(2+)-binding residues include Cys707, Cys710, His723, His727, Cys735, Cys738, His751, His755, Cys763, Cys766, His779, His783, Cys791, Cys794, His807, and His811. The segment at 715-805 (TAKSNLIQHQ…RGFTQKSNLI (91 aa)) is DNA-binding.

Belongs to the class V-like SAM-binding methyltransferase superfamily. In terms of assembly, homodimer. Interacts with EHMT2 and CDYL; interaction only takes place when PRDM9 is bound to hotspot DNA. Interacts with CXXC1; this interaction does not link PRDM9-activated recombination hotspot sites with DSB machinery and is not required for the hotspot recognition pathway. Forms a complex with EWSR1, REC8, SYCP3 and SYCP1; complex formation is dependent of phosphorylated form of REC8 and requires PRDM9 bound to hotspot DNA; EWSR1 joins PRDM9 with the chromosomal axis through REC8. In terms of processing, mono-methylated; automethylated. Tri-methylated; automethylated. Mono-methylation is predominant; automethylation is lower and slower than H3 peptide methylation and is in a highest S-adenosyl-L-methionine concentration-dependent. There are two major sites for automethylation at Lys-368 and Lys-374. Lysines can be simultaneously methylated, such as Lys-368(me3)/Lys-372(me1), Lys-368(me1)/Lys-374(me1) and Lys-368(me1)/Lys-372(me1)/Lys-374(me1). Automethylation is an intramolecular (cis) process. As to expression, specifically expressed in germ cells entering meiotic prophase in female fetal gonads and in postnatal testis. Expressed in early meiotic prophase.

It is found in the nucleus. The protein resides in the chromosome. It catalyses the reaction L-lysyl-[protein] + S-adenosyl-L-methionine = N(6)-methyl-L-lysyl-[protein] + S-adenosyl-L-homocysteine + H(+). It carries out the reaction N(6),N(6)-dimethyl-L-lysyl-[protein] + S-adenosyl-L-methionine = N(6),N(6),N(6)-trimethyl-L-lysyl-[protein] + S-adenosyl-L-homocysteine + H(+). The enzyme catalyses L-lysyl(4)-[histone H3] + 3 S-adenosyl-L-methionine = N(6),N(6),N(6)-trimethyl-L-lysyl(4)-[histone H3] + 3 S-adenosyl-L-homocysteine + 3 H(+). The catalysed reaction is L-lysyl(36)-[histone H3] + 3 S-adenosyl-L-methionine = N(6),N(6),N(6)-trimethyl-L-lysyl(36)-[histone H3] + 3 S-adenosyl-L-homocysteine + 3 H(+). It catalyses the reaction L-lysyl(9)-[histone H3] + 3 S-adenosyl-L-methionine = N(6),N(6),N(6)-trimethyl-L-lysyl(9)-[histone H3] + 3 S-adenosyl-L-homocysteine + 3 H(+). It carries out the reaction L-lysyl(20)-[histone H4] + S-adenosyl-L-methionine = N(6)-methyl-L-lysyl(20)-[histone H4] + S-adenosyl-L-homocysteine + H(+). The enzyme catalyses N(6)-methyl-L-lysyl(20)-[histone H4] + S-adenosyl-L-methionine = N(6),N(6)-dimethyl-L-lysyl(20)-[histone H4] + S-adenosyl-L-homocysteine + H(+). In terms of biological role, histone methyltransferase that sequentially mono-, di-, and tri-methylates both 'Lys-4' (H3K4) and 'Lys-36' (H3K36) of histone H3 to produce respectively trimethylated 'Lys-4' (H3K4me3) and trimethylated 'Lys-36' (H3K36me3) histone H3 and plays a key role in meiotic prophase by determining hotspot localization thereby promoting meiotic recombination. Can also methylate all four core histones with H3 being the best substrate and the most highly modified. Is also able, on one hand, to mono and di-methylate H4K20 and on other hand to trimethylate H3K9 with the di-methylated H3K9 as the best substrate. During meiotic prophase, binds specific DNA sequences through its zinc finger domains thereby determining hotspot localization where it promotes local H3K4me3 and H3K36me3 enrichment on the same nucleosomes through its histone methyltransferase activity. Thereby promotes double-stranded breaks (DSB) formation, at this subset of PRDM9-binding sites, that initiates meiotic recombination for the proper meiotic progression. During meiotic progression hotspot-bound PRDM9 interacts with several complexes; in early leptonema binds CDYL and EHMT2 followed by EWSR1 and CXXC1 by the end of leptonema. EWSR1 joins PRDM9 with the chromosomal axis through REC8. In this way, controls the DSB repair pathway, pairing of homologous chromosomes and sex body formation. Moreover plays a central role in the transcriptional activation of genes during early meiotic prophase thanks to H3K4me3 and H3K36me3 enrichment that represents a specific tag for epigenetic transcriptional activation. In addition performs automethylation. Acetylation and phosphorylation of histone H3 attenuate or prevent histone H3 methylation. This Mus musculus (Mouse) protein is Histone-lysine N-methyltransferase PRDM9.